Reading from the N-terminus, the 329-residue chain is D-alanine--D-alanine ligase (329 aa).

Positions 120-326 constitute an ATP-grasp domain; it reads KLWYDALDIP…FHEFLEDCIN (207 aa). 150–205 provides a ligand contact to ATP; it reads AFEKWGKVFVKAARQGSSVGCYSVAEKQAIAKAVNDAFGYSDQVLVEKAVKPRELE. Positions 280, 293, and 295 each coordinate Mg(2+).

It belongs to the D-alanine--D-alanine ligase family. Mg(2+) is required as a cofactor. Requires Mn(2+) as cofactor.

Its subcellular location is the cytoplasm. The catalysed reaction is 2 D-alanine + ATP = D-alanyl-D-alanine + ADP + phosphate + H(+). It participates in cell wall biogenesis; peptidoglycan biosynthesis. Cell wall formation. This chain is D-alanine--D-alanine ligase, found in Vibrio parahaemolyticus serotype O3:K6 (strain RIMD 2210633).